The primary structure comprises 1024 residues: Beta-galactosidase (1024 aa).

Substrate is bound by residues Asn103 and Asp202. Asp202 serves as a coordination point for Na(+). Residues Glu417, His419, and Glu462 each contribute to the Mg(2+) site. Substrate-binding positions include Glu462 and 538–541; that span reads EYAH. The active-site Proton donor is the Glu462. Glu538 functions as the Nucleophile in the catalytic mechanism. Asn598 contributes to the Mg(2+) binding site. Positions 602 and 605 each coordinate Na(+). Substrate is bound by residues Asn605 and Trp1000.

The protein belongs to the glycosyl hydrolase 2 family. Homotetramer. Mg(2+) serves as cofactor. The cofactor is Na(+).

The enzyme catalyses Hydrolysis of terminal non-reducing beta-D-galactose residues in beta-D-galactosides.. This Escherichia coli O6:H1 (strain CFT073 / ATCC 700928 / UPEC) protein is Beta-galactosidase.